A 1332-amino-acid polypeptide reads, in one-letter code: DNA-directed RNA polymerase subunit beta'' (1332 aa).

Residues Cys-220, Cys-291, Cys-298, and Cys-301 each coordinate Zn(2+).

This sequence belongs to the RNA polymerase beta' chain family. RpoC2 subfamily. In plastids the minimal PEP RNA polymerase catalytic core is composed of four subunits: alpha, beta, beta', and beta''. When a (nuclear-encoded) sigma factor is associated with the core the holoenzyme is formed, which can initiate transcription. Requires Zn(2+) as cofactor.

The protein resides in the plastid. Its subcellular location is the chloroplast. The enzyme catalyses RNA(n) + a ribonucleoside 5'-triphosphate = RNA(n+1) + diphosphate. Its function is as follows. DNA-dependent RNA polymerase catalyzes the transcription of DNA into RNA using the four ribonucleoside triphosphates as substrates. This is DNA-directed RNA polymerase subunit beta'' from Lotus japonicus (Lotus corniculatus var. japonicus).